The chain runs to 373 residues: Glutamate 5-kinase (373 aa).

K15 serves as a coordination point for ATP. 3 residues coordinate substrate: S55, D142, and N154. Residues 174–175 (TD) and 216–222 (TGGMVTK) each bind ATP. Positions 281–359 (SGKIIVDDGA…GEIEAILGYK (79 aa)) constitute a PUA domain.

This sequence belongs to the glutamate 5-kinase family.

The protein localises to the cytoplasm. It carries out the reaction L-glutamate + ATP = L-glutamyl 5-phosphate + ADP. The protein operates within amino-acid biosynthesis; L-proline biosynthesis; L-glutamate 5-semialdehyde from L-glutamate: step 1/2. In terms of biological role, catalyzes the transfer of a phosphate group to glutamate to form L-glutamate 5-phosphate. The chain is Glutamate 5-kinase from Geobacter sulfurreducens (strain ATCC 51573 / DSM 12127 / PCA).